Here is a 580-residue protein sequence, read N- to C-terminus: N(6)-adenosine-methyltransferase catalytic subunit METTL3 (580 aa).

The segment at 1–70 (MSDTWSSIQA…PKPSTTSVAP (70 aa)) is disordered. Serine 2 carries the N-acetylserine; alternate modification. A Phosphoserine; alternate modification is found at serine 2. A compositionally biased stretch (basic and acidic residues) spans 28 to 37 (QDSGHLDLRN). A phosphoserine mark is found at serine 43, serine 48, and serine 50. The span at 55–67 (APTSSGPKPSTTS) shows a compositional bias: low complexity. Residues lysine 177, lysine 211, lysine 212, and lysine 215 each participate in a glycyl lysine isopeptide (Lys-Gly) (interchain with G-Cter in SUMO1) cross-link. Residues 198–217 (LASSASEPAKEPAKKSRKHA) form a disordered region. Residues 210–215 (AKKSRK) carry the Nuclear localization signal motif. A phosphoserine mark is found at serine 219, serine 243, and serine 350. S-adenosyl-L-methionine is bound by residues 377 to 378 (DI) and aspartate 395. Residues 396–410 (PPWDIHMELPYGTLT) form a gate loop 1 region. Interaction with METTL14 stretches follow at residues 450–454 (ERVDE) and 464–480 (QRII…NHGK). Positions 462–479 (QLQRIIRTGRTGHWLNHG) are interphase loop. The tract at residues 465 to 478 (RIIRTGRTGHWLNH) is positively charged region required for RNA-binding. The interval 507 to 515 (VRSTSHKPD) is gate loop 2. S-adenosyl-L-methionine-binding positions include lysine 513, 536-539 (RPHN), and 549-550 (NQ).

It belongs to the MT-A70-like family. In terms of assembly, heterodimer; heterodimerizes with METTL14 to form an antiparallel heterodimer that constitutes an active methyltransferase. Component of the WMM complex, a N6-methyltransferase complex composed of a catalytic subcomplex, named MAC, and of an associated subcomplex, named MACOM. The MAC subcomplex is composed of METTL3 and METTL14. The MACOM subcomplex is composed of WTAP, ZC3H13, CBLL1/HAKAI, VIRMA, and, in some cases of RBM15 (RBM15 or RBM15B). Interacts with NCBP1/CBP80. Interacts with EIF4E. Interacts with EIF3B. Sumoylation inhibits the N6-adenosine-methyltransferase activity. Sumoylation does not affect subcellular location or interaction with METTL14. Desumoylated by SENP1. As to expression, present in both germ cells and somatic cells during testis development (at protein level).

The protein localises to the nucleus. It is found in the nucleus speckle. It localises to the cytoplasm. The enzyme catalyses an adenosine in mRNA + S-adenosyl-L-methionine = an N(6)-methyladenosine in mRNA + S-adenosyl-L-homocysteine + H(+). With respect to regulation, methyltransferase activity is regulated by miRNAs via a sequence pairing mechanism. Methyltransferase activity is inhibited by sumoylation. The METTL3-METTL14 heterodimer forms a N6-methyltransferase complex that methylates adenosine residues at the N(6) position of some RNAs and regulates various processes such as the circadian clock, differentiation of embryonic and hematopoietic stem cells, cortical neurogenesis, response to DNA damage, differentiation of T-cells and primary miRNA processing. In the heterodimer formed with METTL14, METTL3 constitutes the catalytic core. N6-methyladenosine (m6A), which takes place at the 5'-[AG]GAC-3' consensus sites of some mRNAs, plays a role in mRNA stability, processing, translation efficiency and editing. M6A acts as a key regulator of mRNA stability: methylation is completed upon the release of mRNA into the nucleoplasm and promotes mRNA destabilization and degradation. In embryonic stem cells (ESCs), m6A methylation of mRNAs encoding key naive pluripotency-promoting transcripts results in transcript destabilization, promoting differentiation of ESCs. M6A regulates the length of the circadian clock: acts as an early pace-setter in the circadian loop by putting mRNA production on a fast-track for facilitating nuclear processing, thereby providing an early point of control in setting the dynamics of the feedback loop. M6A also regulates circadian regulation of hepatic lipid metabolism. M6A regulates spermatogonial differentiation and meiosis and is essential for male fertility and spermatogenesis. Also required for oogenesis. Involved in the response to DNA damage: in response to ultraviolet irradiation, METTL3 rapidly catalyzes the formation of m6A on poly(A) transcripts at DNA damage sites, leading to the recruitment of POLK to DNA damage sites. M6A is also required for T-cell homeostasis and differentiation: m6A methylation of transcripts of SOCS family members (SOCS1, SOCS3 and CISH) in naive T-cells promotes mRNA destabilization and degradation, promoting T-cell differentiation. Inhibits the type I interferon response by mediating m6A methylation of IFNB. M6A also regulates cortical neurogenesis: m6A methylation of transcripts related to transcription factors, neural stem cells, the cell cycle and neuronal differentiation during brain development promotes their destabilization and decay, promoting differentiation of radial glial cells. M6A also takes place in other RNA molecules, such as primary miRNA (pri-miRNAs). Mediates m6A methylation of Xist RNA, thereby participating in random X inactivation: m6A methylation of Xist leads to target YTHDC1 reader on Xist and promote transcription repression activity of Xist. METTL3 mediates methylation of pri-miRNAs, marking them for recognition and processing by DGCR8. Acts as a positive regulator of mRNA translation independently of the methyltransferase activity: promotes translation by interacting with the translation initiation machinery in the cytoplasm. The sequence is that of N(6)-adenosine-methyltransferase catalytic subunit METTL3 from Mus musculus (Mouse).